Reading from the N-terminus, the 246-residue chain is DNA repair protein RecO (246 aa).

This sequence belongs to the RecO family.

Involved in DNA repair and RecF pathway recombination. The chain is DNA repair protein RecO from Marinobacter nauticus (strain ATCC 700491 / DSM 11845 / VT8) (Marinobacter aquaeolei).